The primary structure comprises 316 residues: Probable cell division protein WhiA (316 aa).

A DNA-binding region (H-T-H motif) is located at residues threonine 275–alanine 309.

It belongs to the WhiA family.

In terms of biological role, involved in cell division and chromosome segregation. In Bacillus mycoides (strain KBAB4) (Bacillus weihenstephanensis), this protein is Probable cell division protein WhiA.